The following is a 376-amino-acid chain: Cysteine proteinase 2 (376 aa).

The N-terminal stretch at 1–18 (MRLLVFLILLIFVNFSFA) is a signal peptide. Positions 19 to 122 (NVRPNGRRFS…EVLNVEDLQT (104 aa)) are cleaved as a propeptide — activation peptide. 3 disulfide bridges follow: C144/C187, C178/C221, and C279/C365. C147 is a catalytic residue. Residues H286 and N343 contribute to the active site.

Belongs to the peptidase C1 family.

It localises to the lysosome. Cysteine proteinases 1 and 2 are believed to participate in the breakdown of protein during differentiation of Dictyostelium as a response to starvation. The chain is Cysteine proteinase 2 (cprB) from Dictyostelium discoideum (Social amoeba).